The primary structure comprises 370 residues: Cytochrome b (370 aa).

4 consecutive transmembrane segments (helical) span residues 25–45, 69–90, 105–125, and 170–190; these read FGSM…FLAV, WLMQ…YIHI, WLSG…GYVL, and FFAL…LHIL. 2 residues coordinate heme b: H75 and H89. Heme b-binding residues include H174 and H188. Residue H193 coordinates a ubiquinone. A run of 4 helical transmembrane segments spans residues 218 to 238, 280 to 300, 312 to 332, and 339 to 358; these read YKDL…VSFF, LGGA…PFTH, LMQL…WSST, and FTTI…ISKP.

This sequence belongs to the cytochrome b family. The cytochrome bc1 complex contains 3 respiratory subunits (MT-CYB, CYC1 and UQCRFS1), 2 core proteins (UQCRC1 and UQCRC2) and probably 6 low-molecular weight proteins. Heme b is required as a cofactor.

The protein resides in the mitochondrion inner membrane. Its function is as follows. Component of the ubiquinol-cytochrome c reductase complex (complex III or cytochrome b-c1 complex) that is part of the mitochondrial respiratory chain. The b-c1 complex mediates electron transfer from ubiquinol to cytochrome c. Contributes to the generation of a proton gradient across the mitochondrial membrane that is then used for ATP synthesis. In Chilabothrus subflavus (Jamaican yellow boa), this protein is Cytochrome b (MT-CYB).